We begin with the raw amino-acid sequence, 244 residues long: LOB domain-containing protein 17 (244 aa).

One can recognise an LOB domain in the interval 6 to 108 (SPCGACKFLR…TQLEILKQQA (103 aa)).

Belongs to the LOB domain-containing protein family. In terms of tissue distribution, expressed in roots, stems, leaves and flowers.

The chain is LOB domain-containing protein 17 (LBD17) from Arabidopsis thaliana (Mouse-ear cress).